The sequence spans 229 residues: Putative N-acetylmannosamine-6-phosphate 2-epimerase (229 aa).

Belongs to the NanE family.

It carries out the reaction an N-acyl-D-glucosamine 6-phosphate = an N-acyl-D-mannosamine 6-phosphate. Its pathway is amino-sugar metabolism; N-acetylneuraminate degradation; D-fructose 6-phosphate from N-acetylneuraminate: step 3/5. Converts N-acetylmannosamine-6-phosphate (ManNAc-6-P) to N-acetylglucosamine-6-phosphate (GlcNAc-6-P). This is Putative N-acetylmannosamine-6-phosphate 2-epimerase from Escherichia coli O127:H6 (strain E2348/69 / EPEC).